Consider the following 246-residue polypeptide: Serine protease 1 (246 aa).

Positions 1–15 (MKTFIFLALLGATVA) are cleaved as a signal peptide. Residues 16–23 (FPIDDDDK) constitute a propeptide, activation peptide. In terms of domain architecture, Peptidase S1 spans 24 to 244 (IVGGYTCSRN…YVSWIQQTIA (221 aa)). 6 disulfides stabilise this stretch: Cys30–Cys160, Cys48–Cys64, Cys132–Cys233, Cys139–Cys206, Cys171–Cys185, and Cys196–Cys220. Residue His63 is the Charge relay system of the active site. Residues Glu75, Asn77, Val80, and Glu85 each coordinate Ca(2+). Residue Asp107 is the Charge relay system of the active site. Catalysis depends on Ser200, which acts as the Charge relay system.

It belongs to the peptidase S1 family. In terms of assembly, interacts with SERPINA1. Ca(2+) serves as cofactor.

It is found in the secreted. It localises to the extracellular space. It catalyses the reaction Preferential cleavage: Arg-|-Xaa, Lys-|-Xaa.. This chain is Serine protease 1, found in Canis lupus familiaris (Dog).